The chain runs to 202 residues: Small ribosomal subunit protein uS4 (202 aa).

One can recognise an S4 RNA-binding domain in the interval 91-168 (SRLSSVLYNS…QKVPDYLEVD (78 aa)).

This sequence belongs to the universal ribosomal protein uS4 family. Part of the 30S ribosomal subunit. Contacts protein S5. The interaction surface between S4 and S5 is involved in control of translational fidelity.

One of the primary rRNA binding proteins, it binds directly to 16S rRNA where it nucleates assembly of the body of the 30S subunit. Its function is as follows. With S5 and S12 plays an important role in translational accuracy. The protein is Small ribosomal subunit protein uS4 of Ehrlichia chaffeensis (strain ATCC CRL-10679 / Arkansas).